Consider the following 344-residue polypeptide: MILRRVTEALEAYKNGEMLIVMDDEDRENEGDLVLAGIFSTPEKINFMATHARGLICVSLTKDLANKFELPPMVSVNDSNHETAFTVSIDAKEAKTGISAFERHLTIELLCKDTTKPSDFVRPGHIFPLIAKDGGVLARTGHTEASVDLCKLAGLKPVSVICEIMKEDGSMARRGDKFLSDFAIKHNLKTLYVSDLISYRLENESLLKMFCQEEREFLKHQTQCYTFLDHQQKNHYAFKFKGAKTHDLAPLVRFHPIKEDFDFLTTGAFEAFFKALEYLKREGGYLIFMNTHSEQNNIVKDFGIGALVLKNLGVKDFRLLSSCEDRQYKALSGFGLKLVETISL.

The DHBP synthase stretch occupies residues Met1–Glu202. D-ribulose 5-phosphate is bound by residues Arg27–Glu28, Asp32, Arg139–Thr143, and Glu163. Mg(2+) is bound at residue Glu28. His142 is a binding site for Mg(2+). A GTP cyclohydrolase II-like region spans residues Asn203 to Leu344.

It in the N-terminal section; belongs to the DHBP synthase family. In the C-terminal section; belongs to the GTP cyclohydrolase II family. Mg(2+) serves as cofactor. The cofactor is Mn(2+).

It carries out the reaction D-ribulose 5-phosphate = (2S)-2-hydroxy-3-oxobutyl phosphate + formate + H(+). It functions in the pathway cofactor biosynthesis; riboflavin biosynthesis; 2-hydroxy-3-oxobutyl phosphate from D-ribulose 5-phosphate: step 1/1. Catalyzes the conversion of D-ribulose 5-phosphate to formate and 3,4-dihydroxy-2-butanone 4-phosphate. This chain is 3,4-dihydroxy-2-butanone 4-phosphate synthase (ribB), found in Helicobacter pylori (strain J99 / ATCC 700824) (Campylobacter pylori J99).